The chain runs to 390 residues: Malonyl-CoA-acyl carrier protein transacylase, mitochondrial (390 aa).

Residues 1-21 constitute a mitochondrion transit peptide; that stretch reads MSVRVARVAWVRGLGASYRRG. Catalysis depends on residues Ser153 and His270. N6-succinyllysine is present on Lys314.

This sequence belongs to the type II malonyltransferase family.

It is found in the mitochondrion. The enzyme catalyses holo-[ACP] + malonyl-CoA = malonyl-[ACP] + CoA. The protein operates within lipid metabolism; fatty acid biosynthesis. Its function is as follows. Catalyzes the transfer of a malonyl moiety from malonyl-CoA to the free thiol group of the phosphopantetheine arm of the mitochondrial ACP protein (NDUFAB1). This suggests the existence of the biosynthesis of fatty acids in mitochondria. Also acts as a mitochondrial small ribosomal subunit (mt-SSU) assembly factor. This is Malonyl-CoA-acyl carrier protein transacylase, mitochondrial from Homo sapiens (Human).